Here is an 81-residue protein sequence, read N- to C-terminus: Protease inhibitor 1 (81 aa).

A signal peptide spans 1–24; the sequence is MSSGGLLLLLGLLTLWAELTPVSG. Residues 29 to 79 form the BPTI/Kunitz inhibitor domain; it reads CELPAETGPCKARIRAFYYNPHSHKCLEFTYGGCKGNANNFKTIDECNRTC. Intrachain disulfides connect C29/C79, C38/C62, and C54/C75.

As to expression, expressed by the venom gland.

The protein resides in the secreted. Its function is as follows. Snake venom serine protease inhibitor. The sequence is that of Protease inhibitor 1 from Walterinnesia aegyptia (Desert black snake).